The sequence spans 471 residues: Alpha-galactosidase (471 aa).

Positions 1–18 are cleaved as a signal peptide; that stretch reads MFLLYLFTSFAAVSGVLG. A disulfide bridge connects residues Cys42 and Cys74. The substrate site is built by Asp72 and Asp73. Residue Asn82 is glycosylated (N-linked (GlcNAc...) asparagine). The cysteines at positions 121 and 151 are disulfide-linked. Lys147 provides a ligand contact to substrate. The active-site Nucleophile is Asp149. Asn175 carries an N-linked (GlcNAc...) asparagine glycan. Residue Arg205 coordinates substrate. Asp209 functions as the Proton donor in the catalytic mechanism. 2 disulfide bridges follow: Cys221-Cys237 and Cys223-Cys230. Gln251 serves as a coordination point for substrate. Residues Asn270, Asn403, Asn412, Asn417, Asn422, Asn435, and Asn454 are each glycosylated (N-linked (GlcNAc...) asparagine).

The protein belongs to the glycosyl hydrolase 27 family. As to quaternary structure, homotetramer.

It localises to the secreted. It catalyses the reaction Hydrolysis of terminal, non-reducing alpha-D-galactose residues in alpha-D-galactosides, including galactose oligosaccharides, galactomannans and galactolipids.. The polypeptide is Alpha-galactosidase (MEL) (Saccharomyces pastorianus (strain ATCC 76529 / Carlsberg bottom yeast no.1 / CBS 1513 / CLIB 176 / NBRC 1167 / NCYC 396 / NRRL Y-12693) (Saaz-type lager yeast)).